We begin with the raw amino-acid sequence, 1068 residues long: Carbamoyl phosphate synthase large chain (1068 aa).

The carboxyphosphate synthetic domain stretch occupies residues 1–401 (MPLNKDIKKV…AFLKGTRSLE (401 aa)). ATP-binding residues include R129, R169, G175, G176, K208, V210, E215, G241, I242, H243, Q284, and E298. The ATP-grasp 1 domain occupies 133–327 (RNVMSRINEP…IAKVASKIAL (195 aa)). Q284, E298, and N300 together coordinate Mg(2+). Mn(2+) contacts are provided by Q284, E298, and N300. Residues 402–549 (IGKYSLEHKK…YSTYDVYDEV (148 aa)) are oligomerization domain. A carbamoyl phosphate synthetic domain region spans residues 550-932 (EVSKNKKVIV…ALYKGFIGAN (383 aa)). An ATP-grasp 2 domain is found at 674-864 (DELLEKLKIA…IVDIATRVML (191 aa)). ATP contacts are provided by R710, K749, L751, E755, G780, V781, H782, S783, Q823, and E835. Mg(2+) contacts are provided by Q823, E835, and N837. Mn(2+) is bound by residues Q823, E835, and N837. One can recognise an MGS-like domain in the interval 933–1068 (ISIKKEKGTV…ETLYIFDLSN (136 aa)). Residues 933–1068 (ISIKKEKGTV…ETLYIFDLSN (136 aa)) are allosteric domain.

Belongs to the CarB family. Composed of two chains; the small (or glutamine) chain promotes the hydrolysis of glutamine to ammonia, which is used by the large (or ammonia) chain to synthesize carbamoyl phosphate. Tetramer of heterodimers (alpha,beta)4. Mg(2+) is required as a cofactor. The cofactor is Mn(2+).

It carries out the reaction hydrogencarbonate + L-glutamine + 2 ATP + H2O = carbamoyl phosphate + L-glutamate + 2 ADP + phosphate + 2 H(+). The catalysed reaction is hydrogencarbonate + NH4(+) + 2 ATP = carbamoyl phosphate + 2 ADP + phosphate + 2 H(+). Its pathway is amino-acid biosynthesis; L-arginine biosynthesis; carbamoyl phosphate from bicarbonate: step 1/1. It participates in pyrimidine metabolism; UMP biosynthesis via de novo pathway; (S)-dihydroorotate from bicarbonate: step 1/3. Its function is as follows. Large subunit of the glutamine-dependent carbamoyl phosphate synthetase (CPSase). CPSase catalyzes the formation of carbamoyl phosphate from the ammonia moiety of glutamine, carbonate, and phosphate donated by ATP, constituting the first step of 2 biosynthetic pathways, one leading to arginine and/or urea and the other to pyrimidine nucleotides. The large subunit (synthetase) binds the substrates ammonia (free or transferred from glutamine from the small subunit), hydrogencarbonate and ATP and carries out an ATP-coupled ligase reaction, activating hydrogencarbonate by forming carboxy phosphate which reacts with ammonia to form carbamoyl phosphate. The chain is Carbamoyl phosphate synthase large chain from Clostridium botulinum (strain Langeland / NCTC 10281 / Type F).